Consider the following 396-residue polypeptide: 1-deoxy-D-xylulose 5-phosphate reductoisomerase (396 aa).

NADPH is bound by residues Thr10, Gly11, Ser12, Ile13, Asn38, and Asn123. Lys124 contacts 1-deoxy-D-xylulose 5-phosphate. Residue Glu125 participates in NADPH binding. Asp149 serves as a coordination point for Mn(2+). Residues Ser150, Glu151, Ser185, and His208 each contribute to the 1-deoxy-D-xylulose 5-phosphate site. Glu151 provides a ligand contact to Mn(2+). Gly214 is an NADPH binding site. 1-deoxy-D-xylulose 5-phosphate-binding residues include Ser221, Asn226, Lys227, and Glu230. Position 230 (Glu230) interacts with Mn(2+).

This sequence belongs to the DXR family. It depends on Mg(2+) as a cofactor. The cofactor is Mn(2+).

The catalysed reaction is 2-C-methyl-D-erythritol 4-phosphate + NADP(+) = 1-deoxy-D-xylulose 5-phosphate + NADPH + H(+). It functions in the pathway isoprenoid biosynthesis; isopentenyl diphosphate biosynthesis via DXP pathway; isopentenyl diphosphate from 1-deoxy-D-xylulose 5-phosphate: step 1/6. Its function is as follows. Catalyzes the NADPH-dependent rearrangement and reduction of 1-deoxy-D-xylulose-5-phosphate (DXP) to 2-C-methyl-D-erythritol 4-phosphate (MEP). The polypeptide is 1-deoxy-D-xylulose 5-phosphate reductoisomerase (Shewanella pealeana (strain ATCC 700345 / ANG-SQ1)).